The chain runs to 547 residues: Chaperonin GroEL (547 aa).

Residues T29 to P32, D86 to T90, G413, D478 to L480, and D494 each bind ATP.

This sequence belongs to the chaperonin (HSP60) family. As to quaternary structure, forms a cylinder of 14 subunits composed of two heptameric rings stacked back-to-back. Interacts with the co-chaperonin GroES.

The protein localises to the cytoplasm. It catalyses the reaction ATP + H2O + a folded polypeptide = ADP + phosphate + an unfolded polypeptide.. Its function is as follows. Together with its co-chaperonin GroES, plays an essential role in assisting protein folding. The GroEL-GroES system forms a nano-cage that allows encapsulation of the non-native substrate proteins and provides a physical environment optimized to promote and accelerate protein folding. This is Chaperonin GroEL from Alkaliphilus metalliredigens (strain QYMF).